Reading from the N-terminus, the 244-residue chain is Mitochondrial import inner membrane translocase subunit Tim21 (244 aa).

The N-terminal 18 residues, 1-18 (MICTLLRAVRCTERLHGC), are a transit peptide targeting the mitochondrion. Residues 69-89 (VRSPQSAKEDGSKQVSVHRSQ) form a disordered region. A helical transmembrane segment spans residues 108–128 (FTYLIVVLIGISITGGLFYTI).

Belongs to the TIM21 family. Component of the TIM23 complex. Component of the MITRAC (mitochondrial translation regulation assembly intermediate of cytochrome c oxidase complex) complex, the core components of this complex being COA3/MITRAC12 and COX14. Interacts with COA3 and MT-CO1/COX1.

The protein localises to the mitochondrion membrane. Its function is as follows. Participates in the translocation of transit peptide-containing proteins across the mitochondrial inner membrane. Also required for assembly of mitochondrial respiratory chain complex I and complex IV as component of the MITRAC (mitochondrial translation regulation assembly intermediate of cytochrome c oxidase complex) complex. Probably shuttles between the presequence translocase and respiratory-chain assembly intermediates in a process that promotes incorporation of early nuclear-encoded subunits into these complexes. The polypeptide is Mitochondrial import inner membrane translocase subunit Tim21 (TIMM21) (Bos taurus (Bovine)).